Consider the following 196-residue polypeptide: Guanylate kinase (196 aa).

The tract at residues 1-24 (MPVESGAGNDQPKRLTVLSGPSGV) is disordered. Residues 13 to 191 (KRLTVLSGPS…VCDELLALIA (179 aa)) form the Guanylate kinase-like domain. 20–27 (GPSGVGKS) provides a ligand contact to ATP.

The protein belongs to the guanylate kinase family.

The protein resides in the cytoplasm. The enzyme catalyses GMP + ATP = GDP + ADP. In terms of biological role, essential for recycling GMP and indirectly, cGMP. This Thermobifida fusca (strain YX) protein is Guanylate kinase.